Consider the following 672-residue polypeptide: Acetyl-coenzyme A synthetase (672 aa).

CoA is bound by residues 217 to 220 (RRGK) and threonine 335. ATP contacts are provided by residues 411 to 413 (GEP), 435 to 440 (DTWWQT), aspartate 529, arginine 544, and arginine 555. Positions 566, 568, and 571 each coordinate Mg(2+). Arginine 613 provides a ligand contact to CoA. Lysine 638 carries the post-translational modification N6-acetyllysine.

Belongs to the ATP-dependent AMP-binding enzyme family. Mg(2+) serves as cofactor. Acetylated. Deacetylation by the SIR2-homolog deacetylase activates the enzyme. In terms of processing, the N-terminus is blocked.

The enzyme catalyses acetate + ATP + CoA = acetyl-CoA + AMP + diphosphate. Catalyzes the conversion of acetate into acetyl-CoA (AcCoA), an essential intermediate at the junction of anabolic and catabolic pathways. AcsA undergoes a two-step reaction. In the first half reaction, AcsA combines acetate with ATP to form acetyl-adenylate (AcAMP) intermediate. In the second half reaction, it can then transfer the acetyl group from AcAMP to the sulfhydryl group of CoA, forming the product AcCoA. The protein is Acetyl-coenzyme A synthetase of Methanothrix soehngenii (Methanosaeta concilii).